The following is a 338-amino-acid chain: Ketol-acid reductoisomerase (NADP(+)) (338 aa).

Residues 1 to 181 form the KARI N-terminal Rossmann domain; that stretch reads MQVYYDKDCD…GGGRTGIIET (181 aa). NADP(+) contacts are provided by residues 24-27, R47, S50, S52, and 82-85; these read FGSQ and DEFQ. Residue H107 is part of the active site. G133 is an NADP(+) binding site. Residues 182-327 enclose the KARI C-terminal knotted domain; sequence TFRDECETDL…RKLRAMMPWI (146 aa). Residues D190, E194, E226, and E230 each coordinate Mg(2+). S251 serves as a coordination point for substrate.

Belongs to the ketol-acid reductoisomerase family. Requires Mg(2+) as cofactor.

The catalysed reaction is (2R)-2,3-dihydroxy-3-methylbutanoate + NADP(+) = (2S)-2-acetolactate + NADPH + H(+). The enzyme catalyses (2R,3R)-2,3-dihydroxy-3-methylpentanoate + NADP(+) = (S)-2-ethyl-2-hydroxy-3-oxobutanoate + NADPH + H(+). Its pathway is amino-acid biosynthesis; L-isoleucine biosynthesis; L-isoleucine from 2-oxobutanoate: step 2/4. It participates in amino-acid biosynthesis; L-valine biosynthesis; L-valine from pyruvate: step 2/4. Its function is as follows. Involved in the biosynthesis of branched-chain amino acids (BCAA). Catalyzes an alkyl-migration followed by a ketol-acid reduction of (S)-2-acetolactate (S2AL) to yield (R)-2,3-dihydroxy-isovalerate. In the isomerase reaction, S2AL is rearranged via a Mg-dependent methyl migration to produce 3-hydroxy-3-methyl-2-ketobutyrate (HMKB). In the reductase reaction, this 2-ketoacid undergoes a metal-dependent reduction by NADPH to yield (R)-2,3-dihydroxy-isovalerate. This is Ketol-acid reductoisomerase (NADP(+)) from Hydrogenovibrio crunogenus (strain DSM 25203 / XCL-2) (Thiomicrospira crunogena).